The sequence spans 228 residues: Large ribosomal subunit protein uL3 (228 aa).

The interval 157-176 is disordered; the sequence is CHRHAGGTGMSASPSRTFKG.

This sequence belongs to the universal ribosomal protein uL3 family. As to quaternary structure, part of the 50S ribosomal subunit. Forms a cluster with proteins L14 and L19.

Its function is as follows. One of the primary rRNA binding proteins, it binds directly near the 3'-end of the 23S rRNA, where it nucleates assembly of the 50S subunit. The chain is Large ribosomal subunit protein uL3 from Rhodopirellula baltica (strain DSM 10527 / NCIMB 13988 / SH1).